The sequence spans 114 residues: Fructose-bisphosphate aldolase 2 (114 aa).

35–38 (NIDT) lines the dihydroxyacetone phosphate pocket.

This sequence belongs to the class II fructose-bisphosphate aldolase family. Homodimer. Requires Zn(2+) as cofactor.

It carries out the reaction beta-D-fructose 1,6-bisphosphate = D-glyceraldehyde 3-phosphate + dihydroxyacetone phosphate. The protein operates within carbohydrate biosynthesis; Calvin cycle. Its pathway is carbohydrate degradation; glycolysis; D-glyceraldehyde 3-phosphate and glycerone phosphate from D-glucose: step 4/4. Functionally, catalyzes the aldol condensation of dihydroxyacetone phosphate (DHAP or glycerone-phosphate) with glyceraldehyde 3-phosphate (G3P) to form fructose 1,6-bisphosphate (FBP) in gluconeogenesis and the reverse reaction in glycolysis. The sequence is that of Fructose-bisphosphate aldolase 2 (cbbA) from Rhodobacter capsulatus (Rhodopseudomonas capsulata).